A 443-amino-acid chain; its full sequence is MSHMTPQEIVHELDKHIIGQEAAKRSVAIALRNRWRRQQVGEPLRHEITPKNILMIGPTGVGKTEIARRLARLADAPFIKIEATKFTEVGYVGRDVDSIIRDLVESAIKQAREHEIRKNKPLAEDRAEERILDALLPSARDSGFDANPSEENNATRQKFRKKLREGELDDKEIDIEITMSQASMEIFAPPGMEELTSQIQGMFQNMGASKKKSRKLRIREARKLLTEEEAARLINDEELKLNAVQNVEQNGIVFLDEIDKITSRSEVSSSDISRQGVQRDLLPLVEGTTISTKYGMIRTDHILFIASGAFHLAKPSDLIPELQGRFPIRVELDSLSADDFKQILTNTDACLIRQYQALLKTEGIELNFSEDAIERLAEIAFSVNEITENIGARRLHTVMEKLLEDISFNATRYSGSTHVIDAAYVDERLGKLSQSEDLARYVL.

Residues Ile-18 and 60–65 each bind ATP; that span reads GVGKTE. A disordered region spans residues 139 to 161; that stretch reads ARDSGFDANPSEENNATRQKFRK. Residues Asp-256, Glu-321, and Arg-393 each coordinate ATP.

It belongs to the ClpX chaperone family. HslU subfamily. In terms of assembly, a double ring-shaped homohexamer of HslV is capped on each side by a ring-shaped HslU homohexamer. The assembly of the HslU/HslV complex is dependent on binding of ATP.

It localises to the cytoplasm. In terms of biological role, ATPase subunit of a proteasome-like degradation complex; this subunit has chaperone activity. The binding of ATP and its subsequent hydrolysis by HslU are essential for unfolding of protein substrates subsequently hydrolyzed by HslV. HslU recognizes the N-terminal part of its protein substrates and unfolds these before they are guided to HslV for hydrolysis. This Nitrosomonas eutropha (strain DSM 101675 / C91 / Nm57) protein is ATP-dependent protease ATPase subunit HslU.